The following is a 584-amino-acid chain: A-type ATP synthase subunit A 2 (584 aa).

Residue 227–234 (GGFGTGKT) participates in ATP binding.

This sequence belongs to the ATPase alpha/beta chains family. Has multiple subunits with at least A(3), B(3), C, D, E, F, H, I and proteolipid K(x).

Its subcellular location is the cell membrane. The catalysed reaction is ATP + H2O + 4 H(+)(in) = ADP + phosphate + 5 H(+)(out). Functionally, component of the A-type ATP synthase that produces ATP from ADP in the presence of a proton gradient across the membrane. The A chain is the catalytic subunit. The sequence is that of A-type ATP synthase subunit A 2 from Methanospirillum hungatei JF-1 (strain ATCC 27890 / DSM 864 / NBRC 100397 / JF-1).